A 215-amino-acid chain; its full sequence is Late embryogenesis abundant protein 14 (215 aa).

Disordered stretches follow at residues 1–129 (MASQ…GQTG) and 190–215 (SGDNKNNAAAGKDTSTYKPGTGSDYQ). Basic and acidic residues-rich tracts occupy residues 13–24 (GETKARAEEKTG), 32–41 (EKAREAKDTA), 54–81 (GAKEATKEKAYETKDATKEKAYEAKDAA), and 88–111 (AMDKGRGAAGATRDKAYDAKDRAA). Positions 192 to 215 (DNKNNAAAGKDTSTYKPGTGSDYQ) are enriched in polar residues.

The protein belongs to the LEA type 4 family. Expressed in the shoot apex and leaves. Expressed in dry seeds. Expressed in roots and leaves.

The protein localises to the nucleus. The protein is Late embryogenesis abundant protein 14 of Oryza sativa subsp. japonica (Rice).